A 364-amino-acid polypeptide reads, in one-letter code: Caffeic acid 3-O-methyltransferase (364 aa).

Residue 131–137 (MNQDKVL) coordinates substrate. A substrate binding region spans residues 163–181 (AFEYHGTDSRFNRVFNEGM). The S-adenosyl-L-methionine site is built by G209, D232, D252, M253, and K266. The active-site Proton acceptor is the H270.

This sequence belongs to the class I-like SAM-binding methyltransferase superfamily. Cation-independent O-methyltransferase family. COMT subfamily. In terms of assembly, homodimer. As to expression, confined to the vascular tissues of organs undergoing lignification such as stems and roots.

It carries out the reaction (E)-caffeate + S-adenosyl-L-methionine = (E)-ferulate + S-adenosyl-L-homocysteine + H(+). The enzyme catalyses tricetin + 2 S-adenosyl-L-methionine = 3',5'-di-O-methyltricetin + 2 S-adenosyl-L-homocysteine + 2 H(+). The catalysed reaction is luteolin + S-adenosyl-L-methionine = chrysoeriol + S-adenosyl-L-homocysteine + H(+). It catalyses the reaction tricetin + S-adenosyl-L-methionine = 3'-O-methyltricetin + S-adenosyl-L-homocysteine + H(+). The protein operates within aromatic compound metabolism; phenylpropanoid biosynthesis. Catalyzes the conversion of caffeic acid to ferulic acid and of 5-hydroxyferulic acid to sinapic acid. The resulting products may subsequently be converted to the corresponding alcohols that are incorporated into lignins. Can use the flavone tricetin (5,7,3',4',5'-pentahydroxyflavone) as the preferred substrate and give rise to its 3',5'-dimethyl derivative, tricin (3',5'-dimethoxy-5,7,4'-trihydroxyflavone), as the major product, and selgin to a lower extent. Tricin exhibits potential benefits for human health including relaxant effect on smooth muscle of intestinal tissues, antioxidant effect, antihistaminic activity, and growth inhibition of human malignant breast tumor cells and colon cancer cells. Can also use luteolin, quercetin and 5-hydroxyferulic acid (5HF) as substrates. This chain is Caffeic acid 3-O-methyltransferase, found in Zea mays (Maize).